Here is a 402-residue protein sequence, read N- to C-terminus: Non-homologous end joining protein Ku (402 aa).

One can recognise a Ku domain in the interval 12–185 (ISFGLVTIPV…VAALTGIAQP (174 aa)). The disordered stretch occupies residues 261-402 (QRAAGGATGG…GPDETAPGGP (142 aa)). Composition is skewed to low complexity over residues 299–308 (GDPAASVPGV) and 332–343 (VPGVPATAVPGT). Pro residues predominate over residues 344 to 358 (PGAPVPTAPGVPSAP). The span at 359 to 376 (APGTSPTSVPGVQTAPNG) shows a compositional bias: low complexity.

The protein belongs to the prokaryotic Ku family. As to quaternary structure, homodimer. Interacts with LigD.

In terms of biological role, with LigD forms a non-homologous end joining (NHEJ) DNA repair enzyme, which repairs dsDNA breaks with reduced fidelity. Binds linear dsDNA with 5'- and 3'- overhangs but not closed circular dsDNA nor ssDNA. Recruits and stimulates the ligase activity of LigD. The sequence is that of Non-homologous end joining protein Ku from Symbiobacterium thermophilum (strain DSM 24528 / JCM 14929 / IAM 14863 / T).